The primary structure comprises 117 residues: Large ribosomal subunit protein bL19 (117 aa).

The protein belongs to the bacterial ribosomal protein bL19 family.

This protein is located at the 30S-50S ribosomal subunit interface and may play a role in the structure and function of the aminoacyl-tRNA binding site. This Azobacteroides pseudotrichonymphae genomovar. CFP2 protein is Large ribosomal subunit protein bL19.